The primary structure comprises 1149 residues: ATP-dependent helicase/deoxyribonuclease subunit B (1149 aa).

The UvrD-like helicase ATP-binding domain maps to 1 to 276; the sequence is MAIRYIFGRA…INLDIEERKV (276 aa). ATP is bound at residue 8 to 15; the sequence is GRAGRGKS. The 314-residue stretch at 273 to 586 folds into the UvrD-like helicase C-terminal domain; the sequence is ERKVLPKEKE…LVGSIERSKS (314 aa). [4Fe-4S] cluster is bound by residues Cys-786, Cys-1105, Cys-1108, and Cys-1114.

The protein belongs to the helicase family. AddB/RexB type 1 subfamily. As to quaternary structure, heterodimer of AddA and AddB. It depends on Mg(2+) as a cofactor. [4Fe-4S] cluster serves as cofactor.

The heterodimer acts as both an ATP-dependent DNA helicase and an ATP-dependent, dual-direction single-stranded exonuclease. Recognizes the chi site generating a DNA molecule suitable for the initiation of homologous recombination. The AddB subunit has 5' -&gt; 3' nuclease activity but not helicase activity. This is ATP-dependent helicase/deoxyribonuclease subunit B from Alkaliphilus metalliredigens (strain QYMF).